Reading from the N-terminus, the 371-residue chain is N-acetyldiaminopimelate deacetylase (371 aa).

The active site involves Asp-68. Catalysis depends on Glu-127, which acts as the Proton acceptor.

It belongs to the peptidase M20A family. N-acetyldiaminopimelate deacetylase subfamily.

The enzyme catalyses N-acetyl-(2S,6S)-2,6-diaminopimelate + H2O = (2S,6S)-2,6-diaminopimelate + acetate. Its pathway is amino-acid biosynthesis; L-lysine biosynthesis via DAP pathway; LL-2,6-diaminopimelate from (S)-tetrahydrodipicolinate (acetylase route): step 3/3. Its function is as follows. Catalyzes the conversion of N-acetyl-diaminopimelate to diaminopimelate and acetate. The protein is N-acetyldiaminopimelate deacetylase of Listeria welshimeri serovar 6b (strain ATCC 35897 / DSM 20650 / CCUG 15529 / CIP 8149 / NCTC 11857 / SLCC 5334 / V8).